The primary structure comprises 1578 residues: BRD4-interacting chromatin-remodeling complex-associated protein (1578 aa).

3 disordered regions span residues 80 to 101, 631 to 673, and 725 to 951; these read DILG…DQPC, PAVT…PSLA, and IVSA…PPPR. The span at 86 to 96 shows a compositional bias: gly residues; the sequence is AAGGGGGGGGA. Low complexity-rich tracts occupy residues 631-662 and 764-782; these read PAVT…TQPQ and IPAA…PSLP. Pro residues-rich tracts occupy residues 793-816, 824-841, and 865-888; these read MPSP…PPSQ, PSEP…PPTL, and PGPP…PASH. The segment covering 889–906 has biased composition (low complexity); it reads LPPASTPSAVASSSEPSA. Ser929 carries the phosphoserine modification. A Phosphothreonine modification is found at Thr931. Over residues 942-951 the composition is skewed to pro residues; that stretch reads PTAPPPPPPR. Lys1067 is modified (N6-acetyllysine). The segment at 1206-1316 is disordered; it reads EKPDEYVSSS…NRPPIKTYEA (111 aa). Composition is skewed to low complexity over residues 1233–1247 and 1275–1294; these read SHGQ…GTSA and ASSS…AASS. Lys1327 participates in a covalent cross-link: Glycyl lysine isopeptide (Lys-Gly) (interchain with G-Cter in SUMO2). 2 disordered regions span residues 1342-1435 and 1457-1578; these read DPVH…PTKV and VLKG…TLNR. Over residues 1346-1370 the composition is skewed to pro residues; that stretch reads QPLPAPTPAKGAEPPPHPAPPPLPP. At Ser1427 the chain carries Phosphoserine. Over residues 1502 to 1532 the composition is skewed to polar residues; it reads ASFSSDSPQDDTLTEHLQSAIDSILNLQQAP. The span at 1538 to 1553 shows a compositional bias: pro residues; it reads GPYPHTGPTPGTPTSP.

In terms of assembly, component of the multiprotein chromatin-remodeling complexes SWI/SNF: SWI/SNF-A (BAF), SWI/SNF-B (PBAF) and related complexes. The canonical complex contains a catalytic subunit (either SMARCA4/BRG1/BAF190A or SMARCA2/BRM/BAF190B) and at least SMARCE1, ACTL6A/BAF53, SMARCC1/BAF155, SMARCC2/BAF170, and SMARCB1/SNF5/BAF47. Other subunits specific to each of the complexes may also be present permitting several possible combinations developmentally and tissue specific. Component of the SWI/SNF (GBAF) subcomplex, which includes at least BICRA or BICRAL (mutually exclusive), BRD9, SS18, the core BAF subunits, SMARCA2/BRM, SMARCA4/BRG1/BAF190A, ACTL6A/BAF53, SMARCC1/BAF155, and SMARCD1/BAF60A. Interacts with BRD4; the interaction bridges BRD4 to the GBAF complex.

The protein localises to the nucleus. Component of SWI/SNF chromatin remodeling subcomplex GBAF that carries out key enzymatic activities, changing chromatin structure by altering DNA-histone contacts within a nucleosome in an ATP-dependent manner. May play a role in BRD4-mediated gene transcription. This Mus musculus (Mouse) protein is BRD4-interacting chromatin-remodeling complex-associated protein.